The sequence spans 614 residues: Numb-like protein (614 aa).

5 disordered regions span residues 1–68 (MSRS…QWQA), 223–283 (GSFR…PVAA), 371–420 (FASA…LEEV), 448–468 (QQQQATSVPPMPTMAPTLQPF), and 539–614 (LGKA…EIEL). Residues 74–223 (RKGTCSFPVR…ASRTSFAREG (150 aa)) enclose the PID domain. Residues S224 and S228 each carry the phosphoserine modification. Residues 233 to 245 (PAEREAGDKKKAE) show a composition bias toward basic and acidic residues. A compositionally biased stretch (low complexity) spans 246–260 (AAAAPAVAPGPAQPG). S263 is modified (phosphoserine). Residue T279 is modified to Phosphothreonine. A compositionally biased stretch (low complexity) spans 371 to 390 (FASAGAPVPGPPSATTGTSA). The span at 409 to 418 (TPSEAERWLE) shows a compositional bias: basic and acidic residues. Phosphoserine is present on S411. The segment covering 563-578 (NGAPWPPEPAPAPAPE) has biased composition (pro residues).

In terms of assembly, associates with EPS15 and NOTCH1. Interacts (via PTB domain) with MAP3K7IP2 (via C-terminal). Interacts (via C-terminal) with TRAF6 (via TRAF domains).

Its subcellular location is the cytoplasm. In terms of biological role, plays a role in the process of neurogenesis. Required throughout embryonic neurogenesis to maintain neural progenitor cells, also called radial glial cells (RGCs), by allowing their daughter cells to choose progenitor over neuronal cell fate. Not required for the proliferation of neural progenitor cells before the onset of embryonic neurogenesis. Also required postnatally in the subventricular zone (SVZ) neurogenesis by regulating SVZ neuroblasts survival and ependymal wall integrity. Negative regulator of NF-kappa-B signaling pathway. The inhibition of NF-kappa-B activation is mediated at least in part, by preventing MAP3K7IP2 to interact with polyubiquitin chains of TRAF6 and RIPK1 and by stimulating the 'Lys-48'-linked polyubiquitination and degradation of TRAF6 in cortical neurons. This is Numb-like protein (Numbl) from Rattus norvegicus (Rat).